We begin with the raw amino-acid sequence, 862 residues long: Alanine--tRNA ligase (862 aa).

His552, His556, Cys653, and His657 together coordinate Zn(2+).

The protein belongs to the class-II aminoacyl-tRNA synthetase family. Requires Zn(2+) as cofactor.

The protein resides in the cytoplasm. The enzyme catalyses tRNA(Ala) + L-alanine + ATP = L-alanyl-tRNA(Ala) + AMP + diphosphate. Catalyzes the attachment of alanine to tRNA(Ala) in a two-step reaction: alanine is first activated by ATP to form Ala-AMP and then transferred to the acceptor end of tRNA(Ala). Also edits incorrectly charged Ser-tRNA(Ala) and Gly-tRNA(Ala) via its editing domain. The polypeptide is Alanine--tRNA ligase (Nitrosospira multiformis (strain ATCC 25196 / NCIMB 11849 / C 71)).